Here is a 523-residue protein sequence, read N- to C-terminus: ATP synthase subunit alpha (523 aa).

Gly-179–Thr-186 provides a ligand contact to ATP.

It belongs to the ATPase alpha/beta chains family. As to quaternary structure, F-type ATPases have 2 components, CF(1) - the catalytic core - and CF(0) - the membrane proton channel. CF(1) has five subunits: alpha(3), beta(3), gamma(1), delta(1), epsilon(1). CF(0) has three main subunits: a(1), b(2) and c(9-12). The alpha and beta chains form an alternating ring which encloses part of the gamma chain. CF(1) is attached to CF(0) by a central stalk formed by the gamma and epsilon chains, while a peripheral stalk is formed by the delta and b chains.

It is found in the cell inner membrane. The catalysed reaction is ATP + H2O + 4 H(+)(in) = ADP + phosphate + 5 H(+)(out). In terms of biological role, produces ATP from ADP in the presence of a proton gradient across the membrane. The alpha chain is a regulatory subunit. This chain is ATP synthase subunit alpha, found in Vibrio vulnificus (strain YJ016).